Here is a 371-residue protein sequence, read N- to C-terminus: MMEKRQPELCPGSPDAESGPGKREDAAIISRQNGCKEDEESKREEGDKEGGGRFKGDEETDDVPLQNSSNGTSISIIINGVTKETASHNALDLKREVPVIELSRRDAIKAVEQRTESHLVPITELRRPPQLPLPPQQRDDARMVQLSPNAFPVPARAMLYNLAQPLAAINSLGGESEQYSMYPSNRVKRRPAPYEVELDEAKIVRRIFTNSRERWRQQNVNGAFAELRKLIPTHPPDKKLSKNEILRLAMKYISFLSNLLEDQDGGRNVSSTTDGETGLMVGAHEVGPQGGPHQDRVVGLARDDIMETMSPGSSCGSLPDGDADGSPESFMEDQDSPPAPRTLTASRGPPLHLTTRDLRRNGRPLDGSSRR.

A disordered region spans residues methionine 1–glycine 71. The segment covering glycine 34–aspartate 57 has biased composition (basic and acidic residues). Residues valine 204–leucine 256 enclose the bHLH domain. Residues glutamine 263–arginine 371 form a disordered region. Residues histidine 293–isoleucine 305 are compositionally biased toward basic and acidic residues. Residues glycine 321–aspartate 335 are compositionally biased toward acidic residues.

Expressed in the main hemopoietic organs in adults, namely the kidney and the spleen. Also expressed in the liver, brain, gill and gonads.

Its subcellular location is the nucleus. Its function is as follows. Transcription factor that plays a pivotal role in hemopoietic and endothelial development. The polypeptide is T-cell acute lymphocytic leukemia protein 1 (Takifugu rubripes (Japanese pufferfish)).